The primary structure comprises 136 residues: Serine--glyoxylate aminotransferase (136 aa).

It belongs to the class-V pyridoxal-phosphate-dependent aminotransferase family. In terms of assembly, homodimer. Pyridoxal 5'-phosphate serves as cofactor. In terms of tissue distribution, expressed in leaves but not in root tissue or seedlings.

The protein resides in the peroxisome. It catalyses the reaction glyoxylate + L-serine = 3-hydroxypyruvate + glycine. It carries out the reaction glyoxylate + L-alanine = glycine + pyruvate. With respect to regulation, inhibited by aminooxyacetate. This chain is Serine--glyoxylate aminotransferase, found in Zea mays (Maize).